The sequence spans 378 residues: Ribosomal RNA large subunit methyltransferase G (378 aa).

This sequence belongs to the methyltransferase superfamily. RlmG family.

The protein localises to the cytoplasm. It carries out the reaction guanosine(1835) in 23S rRNA + S-adenosyl-L-methionine = N(2)-methylguanosine(1835) in 23S rRNA + S-adenosyl-L-homocysteine + H(+). Functionally, specifically methylates the guanine in position 1835 (m2G1835) of 23S rRNA. The chain is Ribosomal RNA large subunit methyltransferase G from Salmonella heidelberg (strain SL476).